A 435-amino-acid chain; its full sequence is Trigger factor (435 aa).

The segment at 125–147 is disordered; the sequence is MEVPEQDTSVSDADVDSELENKR. The PPIase FKBP-type domain maps to 164–249; that stretch reads GDTVVIDYEG…IHEVKEKQLP (86 aa).

This sequence belongs to the FKBP-type PPIase family. Tig subfamily.

Its subcellular location is the cytoplasm. It catalyses the reaction [protein]-peptidylproline (omega=180) = [protein]-peptidylproline (omega=0). In terms of biological role, involved in protein export. Acts as a chaperone by maintaining the newly synthesized protein in an open conformation. Functions as a peptidyl-prolyl cis-trans isomerase. In Limosilactobacillus fermentum (strain NBRC 3956 / LMG 18251) (Lactobacillus fermentum), this protein is Trigger factor.